The chain runs to 87 residues: Small ribosomal subunit protein bS20 (87 aa).

Residues 1 to 27 form a disordered region; that stretch reads MANSVQATKRARQAEKHRQHNAGMRAA. Basic residues predominate over residues 9 to 20; the sequence is KRARQAEKHRQH.

It belongs to the bacterial ribosomal protein bS20 family.

In terms of biological role, binds directly to 16S ribosomal RNA. This is Small ribosomal subunit protein bS20 from Hydrogenovibrio crunogenus (strain DSM 25203 / XCL-2) (Thiomicrospira crunogena).